Consider the following 163-residue polypeptide: NADH-quinone oxidoreductase subunit I (163 aa).

4Fe-4S ferredoxin-type domains follow at residues 55–84 and 94–123; these read RRYP…IEAE and TRYD…EGPN. Residues Cys64, Cys67, Cys70, Cys74, Cys103, Cys106, Cys109, and Cys113 each contribute to the [4Fe-4S] cluster site.

Belongs to the complex I 23 kDa subunit family. NDH-1 is composed of 14 different subunits. Subunits NuoA, H, J, K, L, M, N constitute the membrane sector of the complex. [4Fe-4S] cluster serves as cofactor.

The protein localises to the cell inner membrane. The catalysed reaction is a quinone + NADH + 5 H(+)(in) = a quinol + NAD(+) + 4 H(+)(out). Its function is as follows. NDH-1 shuttles electrons from NADH, via FMN and iron-sulfur (Fe-S) centers, to quinones in the respiratory chain. The immediate electron acceptor for the enzyme in this species is believed to be ubiquinone. Couples the redox reaction to proton translocation (for every two electrons transferred, four hydrogen ions are translocated across the cytoplasmic membrane), and thus conserves the redox energy in a proton gradient. This Caulobacter vibrioides (strain ATCC 19089 / CIP 103742 / CB 15) (Caulobacter crescentus) protein is NADH-quinone oxidoreductase subunit I.